Reading from the N-terminus, the 131-residue chain is Methylglyoxal synthase (131 aa).

An MGS-like domain is found at 1–131 (MKIALIAHDK…GDLDYRKFRK (131 aa)). Residues histidine 8, lysine 12, 34 to 37 (TGTT), and 54 to 55 (SG) contribute to the substrate site. The Proton donor/acceptor role is filled by aspartate 60. Substrate is bound at residue histidine 87.

Belongs to the methylglyoxal synthase family.

It carries out the reaction dihydroxyacetone phosphate = methylglyoxal + phosphate. Functionally, catalyzes the formation of methylglyoxal from dihydroxyacetone phosphate. The chain is Methylglyoxal synthase from Bacillus cytotoxicus (strain DSM 22905 / CIP 110041 / 391-98 / NVH 391-98).